Reading from the N-terminus, the 541-residue chain is Testis-specific chromodomain protein Y 2 (541 aa).

Residues 6–66 (FEVEAIVDKR…RQTEKQKKLT (61 aa)) form the Chromo domain. A disordered region spans residues 72–104 (RIFSNNARRRTSRSTKANYSKNSPKTPVTDKHH). Residues 87-97 (KANYSKNSPKT) are compositionally biased toward polar residues.

In terms of tissue distribution, testis specific.

Its subcellular location is the nucleus. It catalyses the reaction L-lysyl-[protein] + acetyl-CoA = N(6)-acetyl-L-lysyl-[protein] + CoA + H(+). Its function is as follows. May have histone acetyltransferase activity. This chain is Testis-specific chromodomain protein Y 2 (CDY2A), found in Homo sapiens (Human).